We begin with the raw amino-acid sequence, 218 residues long: MLGGTFDPIHDGHLALARRFAELLDLTELVLLPAGQPYQKRDVSAAEHRLAMTRAAAGTLSVPGVTVTVATDEIEHTGPTYTVETLARWRERIGPDASLSLLIGADQLVRLDTWRDWRTLFDYAHIGVSTRPGFELGAAPPDVAREIAARQARADVLKATPAGRLLIDTTLSFDIAATDIRAHLRECIARHAQMPDASAEHVPAAVWAYILQHRLYHS.

It belongs to the NadD family.

The catalysed reaction is nicotinate beta-D-ribonucleotide + ATP + H(+) = deamido-NAD(+) + diphosphate. The protein operates within cofactor biosynthesis; NAD(+) biosynthesis; deamido-NAD(+) from nicotinate D-ribonucleotide: step 1/1. Functionally, catalyzes the reversible adenylation of nicotinate mononucleotide (NaMN) to nicotinic acid adenine dinucleotide (NaAD). The chain is Probable nicotinate-nucleotide adenylyltransferase from Burkholderia cenocepacia (strain ATCC BAA-245 / DSM 16553 / LMG 16656 / NCTC 13227 / J2315 / CF5610) (Burkholderia cepacia (strain J2315)).